A 955-amino-acid polypeptide reads, in one-letter code: uncharacterized protein (955 aa).

Positions 23–90 (ANNYLEEFQK…RNSLLQLFLA (68 aa)) constitute an Importin N-terminal domain.

This is an uncharacterized protein from Schizosaccharomyces pombe (strain 972 / ATCC 24843) (Fission yeast).